Reading from the N-terminus, the 161-residue chain is Small ribosomal subunit protein uS19 (161 aa).

Residues 1-19 show a composition bias toward basic residues; it reads MARQKKYSGKGGARKKNKQ. Positions 1–26 are disordered; it reads MARQKKYSGKGGARKKNKQKQNVAPR.

Belongs to the universal ribosomal protein uS19 family.

Its function is as follows. Protein S19 forms a complex with S13 that binds strongly to the 16S ribosomal RNA. The chain is Small ribosomal subunit protein uS19 from Methanococcus maripaludis (strain C5 / ATCC BAA-1333).